Here is a 30-residue protein sequence, read N- to C-terminus: Fibrinogen (30 aa).

As to quaternary structure, homodimer. Secreted into the hemolymph.

The protein resides in the secreted. Its subcellular location is the extracellular space. Its function is as follows. Clotting protein. The chain is Fibrinogen from Panulirus interruptus (California spiny lobster).